Consider the following 159-residue polypeptide: S-ribosylhomocysteine lyase (159 aa).

Residues His53, His57, and Cys124 each contribute to the Fe cation site.

Belongs to the LuxS family. As to quaternary structure, homodimer. Fe cation is required as a cofactor.

It catalyses the reaction S-(5-deoxy-D-ribos-5-yl)-L-homocysteine = (S)-4,5-dihydroxypentane-2,3-dione + L-homocysteine. Involved in the synthesis of autoinducer 2 (AI-2) which is secreted by bacteria and is used to communicate both the cell density and the metabolic potential of the environment. The regulation of gene expression in response to changes in cell density is called quorum sensing. Catalyzes the transformation of S-ribosylhomocysteine (RHC) to homocysteine (HC) and 4,5-dihydroxy-2,3-pentadione (DPD). This chain is S-ribosylhomocysteine lyase, found in Porphyromonas gingivalis (strain ATCC 33277 / DSM 20709 / CIP 103683 / JCM 12257 / NCTC 11834 / 2561).